A 362-amino-acid polypeptide reads, in one-letter code: Histidinol-phosphate aminotransferase (362 aa).

N6-(pyridoxal phosphate)lysine is present on Lys210.

It belongs to the class-II pyridoxal-phosphate-dependent aminotransferase family. Histidinol-phosphate aminotransferase subfamily. As to quaternary structure, homodimer. Requires pyridoxal 5'-phosphate as cofactor.

It catalyses the reaction L-histidinol phosphate + 2-oxoglutarate = 3-(imidazol-4-yl)-2-oxopropyl phosphate + L-glutamate. It functions in the pathway amino-acid biosynthesis; L-histidine biosynthesis; L-histidine from 5-phospho-alpha-D-ribose 1-diphosphate: step 7/9. This is Histidinol-phosphate aminotransferase from Rhodopirellula baltica (strain DSM 10527 / NCIMB 13988 / SH1).